A 91-amino-acid chain; its full sequence is DNA-directed RNA polymerase subunit omega (91 aa).

Belongs to the RNA polymerase subunit omega family. The RNAP catalytic core consists of 2 alpha, 1 beta, 1 beta' and 1 omega subunit. When a sigma factor is associated with the core the holoenzyme is formed, which can initiate transcription.

The catalysed reaction is RNA(n) + a ribonucleoside 5'-triphosphate = RNA(n+1) + diphosphate. Promotes RNA polymerase assembly. Latches the N- and C-terminal regions of the beta' subunit thereby facilitating its interaction with the beta and alpha subunits. The sequence is that of DNA-directed RNA polymerase subunit omega from Yersinia pestis bv. Antiqua (strain Antiqua).